The following is a 301-amino-acid chain: Probable 5-dehydro-4-deoxyglucarate dehydratase (301 aa).

This sequence belongs to the DapA family.

The enzyme catalyses 5-dehydro-4-deoxy-D-glucarate + H(+) = 2,5-dioxopentanoate + CO2 + H2O. The protein operates within carbohydrate acid metabolism; D-glucarate degradation; 2,5-dioxopentanoate from D-glucarate: step 2/2. The protein is Probable 5-dehydro-4-deoxyglucarate dehydratase of Allorhizobium ampelinum (strain ATCC BAA-846 / DSM 112012 / S4) (Agrobacterium vitis (strain S4)).